Here is a 302-residue protein sequence, read N- to C-terminus: MLDRQQTGIVFNVQKFSVHDGEGIRTLVFLKGCPLHCPWCSNPESQRREPERAYNPTRCLTAAVCGRCAKACPTGAVSIVGGLVCFDRSKCTGCNACVRACPSGAQTVYGETQSVDQILSRVEEDGVFYTRSGGGLTLSGGEALAQPDFALALLREAKKRHIHTTIETCGHYPTEVLDQACRVLDALIFDIKCLDSARHKKATGVGSELILKNIGHVFEHFPDLPVLIRTPVIPGFNDTEEDILGIREMIPRKANIRYEALTYHRMGQPKYGYLGRRYELEGVKADEAFMKRLNIMLKSYEK.

In terms of domain architecture, Radical SAM core spans 19–301; sequence HDGEGIRTLV…RLNIMLKSYE (283 aa). [4Fe-4S] cluster-binding residues include C33, C37, C40, C59, C65, C68, C72, C91, C94, C97, and C101. 39-41 contributes to the S-adenosyl-L-methionine binding site; that stretch reads WCS. 4Fe-4S ferredoxin-type domains lie at 50–81 and 82–111; these read PERAYNPTRCLTAAVCGRCAKACPTGAVSIVG and GLVCFDRSKCTGCNACVRACPSGAQTVYGE. S-adenosyl-L-methionine contacts are provided by residues G141 and 190 to 192; that span reads DIK.

This sequence belongs to the organic radical-activating enzymes family. [4Fe-4S] cluster is required as a cofactor.

The catalysed reaction is glycyl-[protein] + reduced [flavodoxin] + S-adenosyl-L-methionine = glycin-2-yl radical-[protein] + semiquinone [flavodoxin] + 5'-deoxyadenosine + L-methionine + H(+). Its pathway is organosulfur degradation; alkanesulfonate degradation. Involved in the degradation of the organosulfur compound 2(S)-dihydroxypropanesulfonate (DHPS). Catalyzes activation of the (2S)-3-sulfopropanediol sulfolyase HpsG under anaerobic conditions by generation of an organic free radical on a glycine residue. This chain is (2S)-3-sulfopropanediol sulfolyase activating enzyme, found in Bilophila wadsworthia (strain 3_1_6).